The following is a 168-amino-acid chain: MSVANSRIAVYPGTFDPITNGHIDLVNRAAPLFERVVVGVAYSPSKGPALPLERRVELAQEALAAHANVEVRGFDTLLAHFVRDMGAGVLLRGLRAVSDFEYEFQMASMNRHLIPEVETLFLTPAEQYSFISSSLVREIARLGGDVSGFVPASVVDALRQVRESRAQV.

Residue Thr-14 coordinates substrate. ATP-binding positions include 14-15 (TF) and His-22. The substrate site is built by Lys-46, Leu-78, and Arg-92. Residues 93–95 (GLR), Glu-103, and 128–134 (YSFISSS) contribute to the ATP site.

Belongs to the bacterial CoaD family. In terms of assembly, homohexamer. Mg(2+) serves as cofactor.

Its subcellular location is the cytoplasm. The catalysed reaction is (R)-4'-phosphopantetheine + ATP + H(+) = 3'-dephospho-CoA + diphosphate. The protein operates within cofactor biosynthesis; coenzyme A biosynthesis; CoA from (R)-pantothenate: step 4/5. Its function is as follows. Reversibly transfers an adenylyl group from ATP to 4'-phosphopantetheine, yielding dephospho-CoA (dPCoA) and pyrophosphate. This is Phosphopantetheine adenylyltransferase from Xanthomonas campestris pv. campestris (strain B100).